Here is a 292-residue protein sequence, read N- to C-terminus: Probable endonuclease 4 (292 aa).

His70, His111, Glu146, Asp180, His183, His215, Asp228, His230, and Glu260 together coordinate Zn(2+).

This sequence belongs to the AP endonuclease 2 family. The cofactor is Zn(2+).

It catalyses the reaction Endonucleolytic cleavage to 5'-phosphooligonucleotide end-products.. Endonuclease IV plays a role in DNA repair. It cleaves phosphodiester bonds at apurinic or apyrimidinic (AP) sites, generating a 3'-hydroxyl group and a 5'-terminal sugar phosphate. This is Probable endonuclease 4 from Shouchella clausii (strain KSM-K16) (Alkalihalobacillus clausii).